The chain runs to 146 residues: Villin-like protein ABP41 (146 aa).

Belongs to the villin/gelsolin family. As to quaternary structure, binds to actin. In terms of tissue distribution, expressed in pollen (at protein level).

It is found in the cytoplasm. The protein resides in the cytoskeleton. Its function is as follows. Ca(2+)-dependent actin filament-severing protein that is required for pollen tube growth. Probably regulates the dynamics of the actin cytoskeleton. It can promote the assembly of monomers into filaments (nucleation) as well as sever filaments already formed. This Lilium davidii (David's lily) protein is Villin-like protein ABP41.